The sequence spans 1412 residues: DNA-directed RNA polymerase subunit beta' (1412 aa).

Residues C71, C73, C86, and C89 each contribute to the Zn(2+) site. Residues D461, D463, and D465 each coordinate Mg(2+). Zn(2+) contacts are provided by C815, C889, C896, and C899.

It belongs to the RNA polymerase beta' chain family. The RNAP catalytic core consists of 2 alpha, 1 beta, 1 beta' and 1 omega subunit. When a sigma factor is associated with the core the holoenzyme is formed, which can initiate transcription. Mg(2+) serves as cofactor. Requires Zn(2+) as cofactor.

It catalyses the reaction RNA(n) + a ribonucleoside 5'-triphosphate = RNA(n+1) + diphosphate. DNA-dependent RNA polymerase catalyzes the transcription of DNA into RNA using the four ribonucleoside triphosphates as substrates. The protein is DNA-directed RNA polymerase subunit beta' of Actinobacillus pleuropneumoniae serotype 5b (strain L20).